A 287-amino-acid chain; its full sequence is uncharacterized protein (287 aa).

Residues 133-239 (CEVGKTKKMT…KNIIGISIVQ (107 aa)) form the THUMP domain. Positions 257 to 287 (ENTKSIPNDSKLDNFDRDKNQIINDKAEHAE) are disordered. Over residues 266 to 287 (SKLDNFDRDKNQIINDKAEHAE) the composition is skewed to basic and acidic residues.

This is an uncharacterized protein from Schizosaccharomyces pombe (strain 972 / ATCC 24843) (Fission yeast).